We begin with the raw amino-acid sequence, 681 residues long: DNA ligase (681 aa).

Residues 34–38 (DAEYD), 83–84 (SL), and Glu-115 contribute to the NAD(+) site. Residue Lys-117 is the N6-AMP-lysine intermediate of the active site. Positions 138, 185, 301, and 325 each coordinate NAD(+). Zn(2+) contacts are provided by Cys-419, Cys-422, Cys-437, and Cys-443. Positions 602–681 (RKSDVLAGQT…AALLALIGER (80 aa)) constitute a BRCT domain.

This sequence belongs to the NAD-dependent DNA ligase family. LigA subfamily. It depends on Mg(2+) as a cofactor. Mn(2+) is required as a cofactor.

The enzyme catalyses NAD(+) + (deoxyribonucleotide)n-3'-hydroxyl + 5'-phospho-(deoxyribonucleotide)m = (deoxyribonucleotide)n+m + AMP + beta-nicotinamide D-nucleotide.. DNA ligase that catalyzes the formation of phosphodiester linkages between 5'-phosphoryl and 3'-hydroxyl groups in double-stranded DNA using NAD as a coenzyme and as the energy source for the reaction. It is essential for DNA replication and repair of damaged DNA. This Chloroflexus aggregans (strain MD-66 / DSM 9485) protein is DNA ligase.